An 80-amino-acid polypeptide reads, in one-letter code: Kappa-actitoxin-Avd4i (80 aa).

The signal sequence occupies residues 1 to 19 (MNKALFLCLVVLCAAVVFA). Residues 20 to 31 (AEDLQKAKHAPF) constitute a propeptide that is removed on maturation. 3 cysteine pairs are disulfide-bonded: C41-C76, C43-C69, and C59-C77.

Belongs to the sea anemone type 3 (BDS) potassium channel toxin family. In terms of tissue distribution, weakly expressed in the ectodermal tissue from the distal and proximal tentacles, body wall, and oral disk.

The protein resides in the secreted. The protein localises to the nematocyst. Its function is as follows. Blocks Kv3 voltage-gated potassium channels. Reduces blood pressure. This chain is Kappa-actitoxin-Avd4i, found in Anemonia viridis (Snakelocks anemone).